A 225-amino-acid chain; its full sequence is Membrane protein (225 aa).

The Virion surface segment spans residues 1–20 (MSNETNCTLDFEQSVELFKE). A helical membrane pass occupies residues 21–41 (YNLFITAFLLFLTIILQYGYA). Over 42–51 (TRSKFIYILK) the chain is Intravirion. A helical membrane pass occupies residues 52 to 72 (MIVLWCFWPLNIAVGVISCIY). Residues 73–77 (PPNTG) lie on the Virion surface side of the membrane. The chain crosses the membrane as a helical span at residues 78–98 (GLVAAIILTVFACLSFVGYWI). The Intravirion segment spans residues 99-225 (QSIRLFKRCR…VATGGSSLYT (127 aa)).

The protein belongs to the gammacoronaviruses M protein family. Homomultimer. Interacts with envelope E protein in the budding compartment of the host cell, which is located between endoplasmic reticulum and the Golgi complex. Forms a complex with HE and S proteins. Interacts with nucleocapsid N protein. This interaction probably participates in RNA packaging into the virus.

It localises to the virion membrane. The protein resides in the host Golgi apparatus membrane. Its function is as follows. Component of the viral envelope that plays a central role in virus morphogenesis and assembly via its interactions with other viral proteins. The sequence is that of Membrane protein from Gallus gallus (Chicken).